Here is a 147-residue protein sequence, read N- to C-terminus: Hemoglobin subunit gamma-1 (147 aa).

Residue G2 is modified to N-acetylglycine. One can recognise a Globin domain in the interval 3-147 (HFTEEDKATI…VASALSSRYH (145 aa)). T13 carries the phosphothreonine modification. Phosphoserine occurs at positions 45, 51, and 53. K60 is modified (N6-acetyllysine). H64 provides a ligand contact to heme b. Position 83 is an N6-acetyllysine (K83). H93 contributes to the heme b binding site. C94 carries the S-nitrosocysteine modification. S140 carries the phosphoserine modification.

The protein belongs to the globin family. As to quaternary structure, heterotetramer of two alpha chains and two gamma chains in fetal hemoglobin (Hb F). As to expression, red blood cells.

In terms of biological role, gamma chains make up the fetal hemoglobin F, in combination with alpha chains. The protein is Hemoglobin subunit gamma-1 (HBG1) of Pongo pygmaeus (Bornean orangutan).